The primary structure comprises 482 residues: 3-isopropylmalate dehydratase large subunit (482 aa).

A disordered region spans residues 60-79 (ATPDHNVPTTRAERQGGLES). Residues Cys353, Cys414, and Cys417 each coordinate [4Fe-4S] cluster.

The protein belongs to the aconitase/IPM isomerase family. LeuC type 1 subfamily. As to quaternary structure, heterodimer of LeuC and LeuD. [4Fe-4S] cluster serves as cofactor.

The catalysed reaction is (2R,3S)-3-isopropylmalate = (2S)-2-isopropylmalate. Its pathway is amino-acid biosynthesis; L-leucine biosynthesis; L-leucine from 3-methyl-2-oxobutanoate: step 2/4. Catalyzes the isomerization between 2-isopropylmalate and 3-isopropylmalate, via the formation of 2-isopropylmaleate. The protein is 3-isopropylmalate dehydratase large subunit of Xanthomonas euvesicatoria pv. vesicatoria (strain 85-10) (Xanthomonas campestris pv. vesicatoria).